The primary structure comprises 320 residues: MSQAKTGILLANLGTPEAPTPAAVKRYLRQFLSDTRVVDTPRVLWWPLLRGVILPIRSPRVAKLYQSVWMEEGSPLMVYSRRQEKALAARLPDMPVALGMSYGKPSLESAVENLLSQDVEHIVVLALYPQYSCSTVAAVWDELARILATRRHIPGITFIRDYADDEMYIAALVNSARASFAKHGEPDLLLLSYHGIPQRYADEGDDYPQRCRDTTRELVSALGLPPEKVMMTFQSRFGREPWLTPYTDETLKMLGEKGVKHVQVMSPGFSADCLETLEEIAVQNREFFLEAGGTKYEYIPALNDSPEHIEMMVSLVTTRR.

2 residues coordinate Fe cation: histidine 194 and glutamate 275.

Belongs to the ferrochelatase family.

The protein resides in the cytoplasm. The catalysed reaction is heme b + 2 H(+) = protoporphyrin IX + Fe(2+). The protein operates within porphyrin-containing compound metabolism; protoheme biosynthesis; protoheme from protoporphyrin-IX: step 1/1. Its function is as follows. Catalyzes the ferrous insertion into protoporphyrin IX. The polypeptide is Ferrochelatase (Enterobacter sp. (strain 638)).